The following is a 112-amino-acid chain: UPF0342 protein SPH_1504 (112 aa).

This sequence belongs to the UPF0342 family.

The polypeptide is UPF0342 protein SPH_1504 (Streptococcus pneumoniae (strain Hungary19A-6)).